A 230-amino-acid polypeptide reads, in one-letter code: Triosephosphate isomerase (230 aa).

9 to 11 serves as a coordination point for substrate; sequence NYK. The active-site Electrophile is the His-93. Glu-141 serves as the catalytic Proton acceptor. Substrate is bound by residues Ile-146, Gly-180, and 201–202; that span reads AS.

Belongs to the triosephosphate isomerase family. Homotetramer; dimer of dimers.

The protein resides in the cytoplasm. It catalyses the reaction D-glyceraldehyde 3-phosphate = dihydroxyacetone phosphate. The protein operates within carbohydrate biosynthesis; gluconeogenesis. Its pathway is carbohydrate degradation; glycolysis; D-glyceraldehyde 3-phosphate from glycerone phosphate: step 1/1. Its function is as follows. Involved in the gluconeogenesis. Catalyzes stereospecifically the conversion of dihydroxyacetone phosphate (DHAP) to D-glyceraldehyde-3-phosphate (G3P). The protein is Triosephosphate isomerase of Sulfolobus acidocaldarius (strain ATCC 33909 / DSM 639 / JCM 8929 / NBRC 15157 / NCIMB 11770).